We begin with the raw amino-acid sequence, 312 residues long: MSANSHPPNSKNVLCNAAAGAAAGVVAATFVCPLDVIKTRFQVHGLPKLGDANIKGSLIVGSLEQIFKREGMRGLYRGLSPTVMALLSNWAIYFTMYDQLKSFLCSNDHKLSVGANVLAASGAGAATTIATNPLWVVKTRLQTQGMRVGIVPYKSTFSALRRIAYEEGIRGLYSGLVPALAGISHVAIQFPTYEMIKVYLAKKGDKSVDNLNARDVAVASSIAKIFASTLTYPHEVVRARLQEQGHHSEKRYSGVRDCIKKVFEKDGFPGFYRGCATNLLRTTPAAVITFTSFEMVHRFLVTHIPSEQSSIL.

Solcar repeat units follow at residues 11-103 (KNVL…LKSF), 111-199 (LSVG…IKVY), and 211-299 (LNAR…VHRF). The next 6 helical transmembrane spans lie at 17-37 (AAAG…LDVI), 78-98 (GLSP…TMYD), 117-137 (VLAA…LWVV), 171-191 (GLYS…IQFP), 216-232 (VAVA…TLTY), and 271-293 (FYRG…FTSF).

Belongs to the mitochondrial carrier (TC 2.A.29) family. As to expression, highly expressed in young leaf mesophyll cells, root tips and at the branches of adventitious roots. Low expression in all flower tissues and not detected in siliques and seeds.

The protein localises to the plastid. Its subcellular location is the chloroplast membrane. Inhibited by pyridoxal 5'-phosphate, bathophenanthroline, tannic acid, mersalyl, mercuric chloride, p-hydroxymercuribenzoate, p-hydroxymercuribenzoate sulfonate, bromocresol purple and N-ethylmaleimide. Functionally, mediates the NAD(+) import into chloroplast. Favors the NAD(+)(in)/ADP or AMP(out) antiport exchange, but is also able to catalyze a low unidirectional transport (uniport) of NAD(+). Transports NAD(+), nicotinic acid adenine dinucleotide, nicotinamide mononucleotide, nicotinic acid mononucleotide, FAD, FMN, TTP, TDP, TMP, UTP, UDP, UMP, CTP, CDP, CMP, GTP, GDP, GMP, 3'-AMP, ATP, ADP, and AMP, has low transport activity with cAMP, pyrophosphate, NADH and alpha-NAD(+), and has no activity with NADP(+), NADPH, nicotinamide, nicotinic acid, adenosine, thiamine mono- or diphosphate, inorganic phosphate, CoA, folate, NaCl, malate, malonate, citrate, fumarate, aspartate, glutamate, S-adenosylmethionine, lysine, arginine, and ornithine. The chain is Nicotinamide adenine dinucleotide transporter 1, chloroplastic (NDT1) from Arabidopsis thaliana (Mouse-ear cress).